We begin with the raw amino-acid sequence, 176 residues long: Inner membrane-spanning protein YciB (176 aa).

5 helical membrane passes run 23–43, 50–70, 74–94, 119–139, and 150–170; these read MIAA…FLYW, TMQW…IVLG, FIMW…LGSH, LTYM…FVFT, and MFGS…YLST.

The protein belongs to the YciB family.

It localises to the cell inner membrane. Functionally, plays a role in cell envelope biogenesis, maintenance of cell envelope integrity and membrane homeostasis. The polypeptide is Inner membrane-spanning protein YciB (Neisseria gonorrhoeae (strain ATCC 700825 / FA 1090)).